We begin with the raw amino-acid sequence, 343 residues long: L-threonine 3-dehydrogenase (343 aa).

A Zn(2+)-binding site is contributed by C38. Catalysis depends on charge relay system residues T40 and H43. 6 residues coordinate Zn(2+): H63, E64, C93, C96, C99, and C107. Residues I175, D195, R200, 262 to 264, and 286 to 287 contribute to the NAD(+) site; these read LGL and IY.

Belongs to the zinc-containing alcohol dehydrogenase family. As to quaternary structure, homotetramer. Requires Zn(2+) as cofactor.

The protein localises to the cytoplasm. It carries out the reaction L-threonine + NAD(+) = (2S)-2-amino-3-oxobutanoate + NADH + H(+). The protein operates within amino-acid degradation; L-threonine degradation via oxydo-reductase pathway; glycine from L-threonine: step 1/2. Functionally, catalyzes the NAD(+)-dependent oxidation of L-threonine to 2-amino-3-ketobutyrate. The chain is L-threonine 3-dehydrogenase from Saccharopolyspora erythraea (strain ATCC 11635 / DSM 40517 / JCM 4748 / NBRC 13426 / NCIMB 8594 / NRRL 2338).